The sequence spans 215 residues: Proteasome subunit beta (215 aa).

Positions 1-12 (MLGEIQDKVYKG) are cleaved as a propeptide — removed in mature form; by autocatalysis. The active-site Nucleophile is T13.

The protein belongs to the peptidase T1B family. The 20S proteasome core is composed of 14 alpha and 14 beta subunits that assemble into four stacked heptameric rings, resulting in a barrel-shaped structure. The two inner rings, each composed of seven catalytic beta subunits, are sandwiched by two outer rings, each composed of seven alpha subunits. The catalytic chamber with the active sites is on the inside of the barrel. Has a gated structure, the ends of the cylinder being occluded by the N-termini of the alpha-subunits. Is capped at one or both ends by the proteasome regulatory ATPase, PAN.

It localises to the cytoplasm. The enzyme catalyses Cleavage of peptide bonds with very broad specificity.. The formation of the proteasomal ATPase PAN-20S proteasome complex, via the docking of the C-termini of PAN into the intersubunit pockets in the alpha-rings, triggers opening of the gate for substrate entry. Interconversion between the open-gate and close-gate conformations leads to a dynamic regulation of the 20S proteasome proteolysis activity. Component of the proteasome core, a large protease complex with broad specificity involved in protein degradation. This Archaeoglobus profundus (strain DSM 5631 / JCM 9629 / NBRC 100127 / Av18) protein is Proteasome subunit beta.